Here is an 82-residue protein sequence, read N- to C-terminus: Putative membrane protein insertion efficiency factor (82 aa).

This sequence belongs to the UPF0161 family.

The protein resides in the cell inner membrane. Could be involved in insertion of integral membrane proteins into the membrane. The sequence is that of Putative membrane protein insertion efficiency factor from Colwellia psychrerythraea (strain 34H / ATCC BAA-681) (Vibrio psychroerythus).